We begin with the raw amino-acid sequence, 319 residues long: DNA-directed RNA polymerases II, IV and V subunit 3 (319 aa).

Met1 carries the N-acetylmethionine modification.

It belongs to the archaeal Rpo3/eukaryotic RPB3 RNA polymerase subunit family. Component of the RNA polymerase II complex consisting of at least 12 subunits. Interacts with SHH1, CLSY1, NRPB11 and NRPD1. Interacts with IYO.

It localises to the nucleus. DNA-dependent RNA polymerase catalyzes the transcription of DNA into RNA using the four ribonucleoside triphosphates as substrates. Component of RNA polymerase II which synthesizes mRNA precursors and many functional non-coding RNAs. Pol II is the central component of the basal RNA polymerase II transcription machinery. It is composed of mobile elements that move relative to each other. NRPB3 is part of the core element with the central large cleft and the clamp element that moves to open and close the cleft. Component of RNA polymerases IV and V which mediate short-interfering RNAs (siRNA) accumulation and subsequent RNA-directed DNA methylation-dependent (RdDM) transcriptional gene silencing (TGS) of endogenous repeated sequences, including transposable elements. This chain is DNA-directed RNA polymerases II, IV and V subunit 3 (NRPB3), found in Arabidopsis thaliana (Mouse-ear cress).